Here is a 752-residue protein sequence, read N- to C-terminus: Neuroendocrine convertase 1 (752 aa).

Positions methionine 1 to alanine 27 are cleaved as a signal peptide. Residues lysine 28–arginine 110 constitute a propeptide that is removed on maturation. One can recognise a Peptidase S8 domain in the interval glutamine 129–valine 450. Aspartate 167 acts as the Charge relay system in catalysis. N-linked (GlcNAc...) asparagine glycosylation is present at asparagine 173. The active-site Charge relay system is the histidine 208. Disulfide bonds link cysteine 225–cysteine 374 and cysteine 317–cysteine 347. The Charge relay system role is filled by serine 382. The N-linked (GlcNAc...) asparagine glycan is linked to asparagine 401. Positions asparagine 460–glutamine 597 constitute a P/Homo B domain. A disulfide bridge connects residues cysteine 467 and cysteine 494. The interval proline 631 to alanine 662 is disordered. N-linked (GlcNAc...) asparagine glycosylation occurs at asparagine 645.

It belongs to the peptidase S8 family. Furin subfamily. It depends on Ca(2+) as a cofactor.

The protein localises to the cytoplasmic vesicle. It is found in the secretory vesicle. The catalysed reaction is Release of protein hormones, neuropeptides and renin from their precursors, generally by hydrolysis of -Lys-Arg-|- bonds.. In terms of biological role, involved in the processing of hormone and other protein precursors at sites comprised of pairs of basic amino acid residues. Substrates include POMC, renin, enkephalin, dynorphin, somatostatin, insulin and AGRP. This chain is Neuroendocrine convertase 1 (Pcsk1), found in Rattus norvegicus (Rat).